We begin with the raw amino-acid sequence, 380 residues long: Glycine betaine/carnitine/choline transport ATP-binding protein OpuCA (380 aa).

The region spanning 2-236 (LKLEQVSKVY…PANEFVEEFI (235 aa)) is the ABC transporter domain. An ATP-binding site is contributed by 35–42 (GPSGCGKT). CBS domains are found at residues 255 to 314 (MNRT…VGDV) and 315 to 373 (YRSD…WGDE).

The protein belongs to the ABC transporter superfamily. The complex is composed of two ATP-binding proteins (OpuCA), two transmembrane proteins (OpuCB and OpuCD) and a solute-binding protein (OpuCC).

Binds cyclic di-AMP (c-di-AMP), which may regulate the transporter activity. In terms of biological role, involved in a high affinity multicomponent binding-protein-dependent transport system for glycine betaine, carnitine and choline; probably responsible for energy coupling to the transport system. This Bacillus subtilis (strain 168) protein is Glycine betaine/carnitine/choline transport ATP-binding protein OpuCA (opuCA).